Here is a 138-residue protein sequence, read N- to C-terminus: Gas vesicle protein A (138 aa).

The tract at residues glutamate 74–glutamate 138 is disordered. Positions glycine 116–serine 129 are enriched in low complexity.

This sequence belongs to the gas vesicle GvpA family. The gas vesicle shell is 2 nm thick and consists of a single layer of this protein. It forms helical ribs nearly perpendicular to the long axis of the vesicle.

It is found in the gas vesicle shell. Gas vesicles are hollow, gas filled proteinaceous nanostructures found in some microorganisms. During planktonic growth they allow positioning of the organism at a favorable depth for light or nutrient acquisition. GvpA forms the protein shell. It is not clear what function gas vesicles perform in soil bacteria. This Streptomyces sp. (strain CB03234) protein is Gas vesicle protein A.